A 1398-amino-acid chain; its full sequence is DNA-directed RNA polymerase subunit beta' (1398 aa).

Zn(2+) contacts are provided by cysteine 71, cysteine 73, cysteine 86, and cysteine 89. Residues aspartate 462, aspartate 464, and aspartate 466 each contribute to the Mg(2+) site. Positions 810, 884, 891, and 894 each coordinate Zn(2+).

It belongs to the RNA polymerase beta' chain family. As to quaternary structure, the RNAP catalytic core consists of 2 alpha, 1 beta, 1 beta' and 1 omega subunit. When a sigma factor is associated with the core the holoenzyme is formed, which can initiate transcription. Mg(2+) serves as cofactor. Requires Zn(2+) as cofactor.

It carries out the reaction RNA(n) + a ribonucleoside 5'-triphosphate = RNA(n+1) + diphosphate. Its function is as follows. DNA-dependent RNA polymerase catalyzes the transcription of DNA into RNA using the four ribonucleoside triphosphates as substrates. In Mesorhizobium japonicum (strain LMG 29417 / CECT 9101 / MAFF 303099) (Mesorhizobium loti (strain MAFF 303099)), this protein is DNA-directed RNA polymerase subunit beta'.